A 391-amino-acid chain; its full sequence is RAB6A-GEF complex partner protein 2 (391 aa).

It belongs to the RGP1 family. Forms a complex with RIC1; the interaction enhances RAB6A GTPase activity. Interacts with RIC1. Interacts with RAB6A; the interaction is direct with a preference for RAB6A-GDP. Interacts with RAB33B.

It is found in the cytoplasm. The protein resides in the cytosol. The protein localises to the membrane. Its function is as follows. The RIC1-RGP1 complex acts as a guanine nucleotide exchange factor (GEF), which activates RAB6A by exchanging bound GDP for free GTP and may thereby required for efficient fusion of endosome-derived vesicles with the Golgi compartment. The RIC1-RGP1 complex participates in the recycling of mannose-6-phosphate receptors. This chain is RAB6A-GEF complex partner protein 2, found in Homo sapiens (Human).